The primary structure comprises 376 residues: MSGKSPAQTRVVVGMSGGVDSSVTALLLKEQGYDVIGVFMKNWDDTDENGVCTATEDYKDVAAVADQIGVPYYSVNFEKEYWDRVFEYFLAEYRAGRTPNPDVMCNKEIKFKAFLDYAMELGADYVATGHYAQVRTDEDGTVHMLRGADNNKDQTYFLSQLTQEQLKKTMFPLGHLEKPEVRRIAEKAGLATAKKKDSTGICFIGEKNFKKFLGEYLPAQPGKMMTLDGVEMGNHAGLMYYTIGQRGGLGIGGQHGQLTSDPWFVVGKDLTTNTLYVGQGFHHEHLYSTSLDASDLSFTREMPETFDLHCTAKFRYRQEDTGVTIHVKADKVTVDFDEPVRAITPGQAVVFYDGEECLGGAMIDVAYKEQKVMQYQ.

Residues 14–21 (GMSGGVDS) and methionine 40 contribute to the ATP site. Residues 100–102 (NPD) form an interaction with target base in tRNA region. The Nucleophile role is filled by cysteine 105. Cysteine 105 and cysteine 202 form a disulfide bridge. Glycine 129 contributes to the ATP binding site. Residues 152-154 (KDQ) are interaction with tRNA. Cysteine 202 serves as the catalytic Cysteine persulfide intermediate. The segment at 315-316 (RY) is interaction with tRNA.

This sequence belongs to the MnmA/TRMU family.

The protein localises to the cytoplasm. It catalyses the reaction S-sulfanyl-L-cysteinyl-[protein] + uridine(34) in tRNA + AH2 + ATP = 2-thiouridine(34) in tRNA + L-cysteinyl-[protein] + A + AMP + diphosphate + H(+). In terms of biological role, catalyzes the 2-thiolation of uridine at the wobble position (U34) of tRNA, leading to the formation of s(2)U34. This is tRNA-specific 2-thiouridylase MnmA from Lactococcus lactis subsp. cremoris (strain SK11).